We begin with the raw amino-acid sequence, 263 residues long: Orotidine 5'-phosphate decarboxylase (263 aa).

Substrate-binding positions include Asp-36, 58-60, 90-99, Tyr-216, and Arg-234; these read KTH and DRKFADIGNT. Lys-92 acts as the Proton donor in catalysis.

The protein belongs to the OMP decarboxylase family.

It carries out the reaction orotidine 5'-phosphate + H(+) = UMP + CO2. Its pathway is pyrimidine metabolism; UMP biosynthesis via de novo pathway; UMP from orotate: step 2/2. This is Orotidine 5'-phosphate decarboxylase (URA3) from Komagataella pastoris (Yeast).